Here is a 369-residue protein sequence, read N- to C-terminus: Protein FAM187B (369 aa).

An N-terminal signal peptide occupies residues 1-17; sequence MPPMLWLLLNFAAPALG. Over 18–333 the chain is Extracellular; that stretch reads FYFSISCPSG…PGRADSVLKG (316 aa). Residues asparagine 45, asparagine 68, and asparagine 130 are each glycosylated (N-linked (GlcNAc...) asparagine). A helical membrane pass occupies residues 334-354; that stretch reads LKLVLLVGTVLVLLGALLKFI. Residues 355–369 are Cytoplasmic-facing; that stretch reads RPSPGKRSKQVLMVK.

Belongs to the FAM187 family.

The protein resides in the membrane. This chain is Protein FAM187B (FAM187B), found in Macaca fascicularis (Crab-eating macaque).